The sequence spans 338 residues: Ribonucleoside-diphosphate reductase small subunit (338 aa).

The Fe cation site is built by Asp-81, Glu-112, and His-115. Tyr-119 is a catalytic residue. Fe cation is bound by residues Glu-174, Glu-208, and His-211.

The protein belongs to the ribonucleoside diphosphate reductase small chain family. As to quaternary structure, heterodimer of a large and a small subunit. The cofactor is Fe cation.

It localises to the cytoplasm. The enzyme catalyses a 2'-deoxyribonucleoside 5'-diphosphate + [thioredoxin]-disulfide + H2O = a ribonucleoside 5'-diphosphate + [thioredoxin]-dithiol. Provides the precursors necessary for DNA synthesis. Catalyzes the biosynthesis of deoxyribonucleotides from the corresponding ribonucleotides. This Dictyostelium discoideum (Social amoeba) protein is Ribonucleoside-diphosphate reductase small subunit (rnrB-1).